Consider the following 210-residue polypeptide: Ribonuclease HII (210 aa).

Residues A16–N207 enclose the RNase H type-2 domain. A divalent metal cation is bound by residues D22, E23, and D116.

It belongs to the RNase HII family. Mn(2+) serves as cofactor. It depends on Mg(2+) as a cofactor.

The protein localises to the cytoplasm. The enzyme catalyses Endonucleolytic cleavage to 5'-phosphomonoester.. Functionally, endonuclease that specifically degrades the RNA of RNA-DNA hybrids. The sequence is that of Ribonuclease HII from Anaplasma phagocytophilum (strain HZ).